The sequence spans 561 residues: Reductase FVEG_12641 (561 aa).

Positions M1–G26 are disordered. Positions Q52–L189 constitute an MOSC domain. The 106-residue stretch at S237–N342 folds into the FAD-binding FR-type domain. Residues F288–E289, G305–S307, R313–S316, and T362 each bind FMN. The 2Fe-2S ferredoxin-type domain maps to F474 to D561. C512 lines the [2Fe-2S] cluster pocket. Residue S514 coordinates FMN. [2Fe-2S] cluster is bound by residues C517, C520, and C548.

The protein belongs to the PDR/VanB family. Monomer. Requires FMN as cofactor.

Reductase; part of the Fusarium detoxification of benzoxazolinone cluster 2 (FDB2) involved in the degradation of benzoxazolinones produced by the host plant. Maize, wheat, and rye produce the 2 benzoxazinone phytoanticipins 2,4-dihy-droxy-7-methoxy-1,4-benzoxazin-3-one (DIMBOA) and 2,4-dihydroxy-1,4-benzoxazin-3-one (DIBOA) that, due to their inherent instability once released, spontaneously degrade to the more stable corresponding benzoxazolinones, 6-methoxy-2-benzoxazolinone (MBOA) and 2-benzoxazolinone (BOA), respectively. The first step in the detoxification of benzoxazolinones involves the hydrolysis of the cyclic ester bond of benzoxazolinones by the FDB1 cluster gamma-lactamase MBL1 to aminophenols. MBL1 is able to convert BOA into 2-aminophenol (2-AP), as well as MBOA into 5-methoxy-2-aminophenol (2-AMP). The FDB2 cluster N-malonyltransferase FDB2/NAT1 then metabolizes aminophenols via N-malonylation to non-toxic malonamic acids. FDB2/NAT1 converts 2-AP into N-(2-hydroxyphenyl) malonamic acid (HPMA) and 2-AMP into N-(2-hydroxy-4-methoxyphenyl) malonamic acid (HMPMA). The duplicated dienlactone hydrolases DLH1 and DLH2 may provide redundant function for hydrolyzing the lactone moiety in the BOA molecule. The roles of the amidases an other enzymes encoded by the 2 FDB clusters have not been identified so far. The chain is Reductase FVEG_12641 from Gibberella moniliformis (strain M3125 / FGSC 7600) (Maize ear and stalk rot fungus).